Here is a 395-residue protein sequence, read N- to C-terminus: Probable inactive serine/threonine-protein kinase DDB_G0293746 (395 aa).

In terms of domain architecture, Protein kinase spans 9-395 (YSEIDLISDN…ITQFIIDYLF (387 aa)). ATP-binding positions include 15-23 (ISDNPFKNY) and Lys54. The segment at 213 to 266 (NSSLSSLSSSTSSSSSSSSSTNCNNNTTENNNNNYNNNNNNNNNNNNNNNNNSL) is disordered.

Belongs to the protein kinase superfamily. Ser/Thr protein kinase family.

The polypeptide is Probable inactive serine/threonine-protein kinase DDB_G0293746 (Dictyostelium discoideum (Social amoeba)).